The chain runs to 342 residues: Nucleoid-associated protein Sfri_2491 (342 aa).

Belongs to the YejK family.

It is found in the cytoplasm. The protein localises to the nucleoid. The polypeptide is Nucleoid-associated protein Sfri_2491 (Shewanella frigidimarina (strain NCIMB 400)).